A 479-amino-acid polypeptide reads, in one-letter code: U2 small nuclear ribonucleoprotein auxiliary factor 35 kDa subunit-related protein 1 (479 aa).

The segment at 1-63 (MAALEKMTFP…EDTFIEEQQL (63 aa)) is disordered. A compositionally biased stretch (basic residues) spans 20-37 (SHKKYRAALKKEKRKKRR). A compositionally biased stretch (acidic residues) spans 50–63 (QEEEEDTFIEEQQL). Lysine 67 is covalently cross-linked (Glycyl lysine isopeptide (Lys-Gly) (interchain with G-Cter in SUMO2)). The C3H1-type 1 zinc finger occupies 171–199 (EKDRANCPFYSKTGACRFGDRCSRKHNFP). An RRM domain is found at 203–309 (PTLLIKSMFT…RQLQCEFCPV (107 aa)). Residues 311 to 338 (RWKMAICGLFEIQQCPRGKHCNFLHVFR) form a C3H1-type 2 zinc finger. Serine 354 carries the post-translational modification Phosphoserine. Residues 356-479 (DQTGSSFGKN…DRTVQSPQSK (124 aa)) are disordered. 2 stretches are compositionally biased toward basic and acidic residues: residues 365 to 379 (NSERREKMGHHDHYY) and 388 to 403 (PSPDHTYKRNGESERK). Serine 389 bears the Phosphoserine mark. Basic residues-rich tracts occupy residues 404 to 417 (KSSHRGKKSHKRTS) and 442 to 451 (SQSRRSHRSR).

Its subcellular location is the nucleus. The chain is U2 small nuclear ribonucleoprotein auxiliary factor 35 kDa subunit-related protein 1 from Homo sapiens (Human).